Here is a 591-residue protein sequence, read N- to C-terminus: Tricyclene synthase, chloroplastic (591 aa).

Residues 1–45 constitute a chloroplast transit peptide; that stretch reads MATLLQIGSGVIYSNALRKTLRRPQSSTCIIVTETTPCNKSPTVQ. R302, D339, D343, R481, and N484 together coordinate (2E)-geranyl diphosphate. The Mg(2+) site is built by D339 and D343. The DDXXD motif motif lies at 339–343; the sequence is DDIYD. Mg(2+) is bound by residues N484, T488, and E492.

Belongs to the terpene synthase family. Tpsb subfamily. Mg(2+) is required as a cofactor. Mn(2+) serves as cofactor. Predominantly expressed in flowers but also in leaves, siliques and in stems.

The protein localises to the plastid. The protein resides in the chloroplast stroma. The enzyme catalyses (2E)-geranyl diphosphate = beta-myrcene + diphosphate. The catalysed reaction is (2E)-geranyl diphosphate = tricyclene + diphosphate. It catalyses the reaction (2E)-geranyl diphosphate = (E)-beta-ocimene + diphosphate. It functions in the pathway secondary metabolite biosynthesis; terpenoid biosynthesis. In terms of biological role, involved in monoterpene (C10) biosynthesis. The major product is beta-myrcene (56%) followed by (E)-beta-ocimene (20%) and minor amounts (less than 5%) of the cyclic monoterpene (-)-limonene, (+)-limonene, 2-carene and tricyclene. This chain is Tricyclene synthase, chloroplastic, found in Arabidopsis thaliana (Mouse-ear cress).